The sequence spans 343 residues: tRNA N6-adenosine threonylcarbamoyltransferase (343 aa).

The Fe cation site is built by His111 and His115. Substrate is bound by residues 134-138, Asp167, Gly180, and Asn276; that span reads LVSGG. A Fe cation-binding site is contributed by Asp304.

It belongs to the KAE1 / TsaD family. Fe(2+) is required as a cofactor.

Its subcellular location is the cytoplasm. The enzyme catalyses L-threonylcarbamoyladenylate + adenosine(37) in tRNA = N(6)-L-threonylcarbamoyladenosine(37) in tRNA + AMP + H(+). In terms of biological role, required for the formation of a threonylcarbamoyl group on adenosine at position 37 (t(6)A37) in tRNAs that read codons beginning with adenine. Is involved in the transfer of the threonylcarbamoyl moiety of threonylcarbamoyl-AMP (TC-AMP) to the N6 group of A37, together with TsaE and TsaB. TsaD likely plays a direct catalytic role in this reaction. The sequence is that of tRNA N6-adenosine threonylcarbamoyltransferase from Chromohalobacter salexigens (strain ATCC BAA-138 / DSM 3043 / CIP 106854 / NCIMB 13768 / 1H11).